Reading from the N-terminus, the 472-residue chain is Argininosuccinate lyase (472 aa).

Belongs to the lyase 1 family. Argininosuccinate lyase subfamily.

The protein resides in the cytoplasm. The enzyme catalyses 2-(N(omega)-L-arginino)succinate = fumarate + L-arginine. It functions in the pathway amino-acid biosynthesis; L-arginine biosynthesis; L-arginine from L-ornithine and carbamoyl phosphate: step 3/3. In Maricaulis maris (strain MCS10) (Caulobacter maris), this protein is Argininosuccinate lyase.